A 212-amino-acid polypeptide reads, in one-letter code: Imidazole glycerol phosphate synthase subunit HisH (212 aa).

The region spanning 2–212 (LTAIIDYESG…MIGNFLTWTP (211 aa)) is the Glutamine amidotransferase type-1 domain. The active-site Nucleophile is Cys-87. Catalysis depends on residues His-192 and Glu-194.

Heterodimer of HisH and HisF.

The protein resides in the cytoplasm. It carries out the reaction 5-[(5-phospho-1-deoxy-D-ribulos-1-ylimino)methylamino]-1-(5-phospho-beta-D-ribosyl)imidazole-4-carboxamide + L-glutamine = D-erythro-1-(imidazol-4-yl)glycerol 3-phosphate + 5-amino-1-(5-phospho-beta-D-ribosyl)imidazole-4-carboxamide + L-glutamate + H(+). It catalyses the reaction L-glutamine + H2O = L-glutamate + NH4(+). It functions in the pathway amino-acid biosynthesis; L-histidine biosynthesis; L-histidine from 5-phospho-alpha-D-ribose 1-diphosphate: step 5/9. In terms of biological role, IGPS catalyzes the conversion of PRFAR and glutamine to IGP, AICAR and glutamate. The HisH subunit catalyzes the hydrolysis of glutamine to glutamate and ammonia as part of the synthesis of IGP and AICAR. The resulting ammonia molecule is channeled to the active site of HisF. The sequence is that of Imidazole glycerol phosphate synthase subunit HisH from Ruegeria pomeroyi (strain ATCC 700808 / DSM 15171 / DSS-3) (Silicibacter pomeroyi).